The primary structure comprises 147 residues: D-aminoacyl-tRNA deacylase (147 aa).

Positions 136 to 137 (GP) match the Gly-cisPro motif, important for rejection of L-amino acids motif.

It belongs to the DTD family. In terms of assembly, homodimer.

It localises to the cytoplasm. The enzyme catalyses glycyl-tRNA(Ala) + H2O = tRNA(Ala) + glycine + H(+). It catalyses the reaction a D-aminoacyl-tRNA + H2O = a tRNA + a D-alpha-amino acid + H(+). In terms of biological role, an aminoacyl-tRNA editing enzyme that deacylates mischarged D-aminoacyl-tRNAs. Also deacylates mischarged glycyl-tRNA(Ala), protecting cells against glycine mischarging by AlaRS. Acts via tRNA-based rather than protein-based catalysis; rejects L-amino acids rather than detecting D-amino acids in the active site. By recycling D-aminoacyl-tRNA to D-amino acids and free tRNA molecules, this enzyme counteracts the toxicity associated with the formation of D-aminoacyl-tRNA entities in vivo and helps enforce protein L-homochirality. The sequence is that of D-aminoacyl-tRNA deacylase from Streptococcus equi subsp. zooepidemicus (strain MGCS10565).